The following is a 446-amino-acid chain: Trigger factor (446 aa).

The PPIase FKBP-type domain maps to 182 to 267 (GDKVVVDYQN…VKNIFMMKAI (86 aa)).

Belongs to the FKBP-type PPIase family. Tig subfamily.

The protein localises to the cytoplasm. The catalysed reaction is [protein]-peptidylproline (omega=180) = [protein]-peptidylproline (omega=0). Its function is as follows. Involved in protein export. Acts as a chaperone by maintaining the newly synthesized protein in an open conformation. Functions as a peptidyl-prolyl cis-trans isomerase. The protein is Trigger factor of Ehrlichia ruminantium (strain Gardel).